Reading from the N-terminus, the 157-residue chain is Glutamyl-tRNA(Gln) amidotransferase subunit C, mitochondrial (157 aa).

This sequence belongs to the GatC family. In terms of assembly, subunit of the heterotrimeric GatCAB amidotransferase (AdT) complex, composed of A, B and C subunits.

The protein resides in the mitochondrion. The catalysed reaction is L-glutamyl-tRNA(Gln) + L-glutamine + ATP + H2O = L-glutaminyl-tRNA(Gln) + L-glutamate + ADP + phosphate + H(+). In terms of biological role, allows the formation of correctly charged Gln-tRNA(Gln) through the transamidation of misacylated Glu-tRNA(Gln) in the mitochondria. The reaction takes place in the presence of glutamine and ATP through an activated gamma-phospho-Glu-tRNA(Gln). This Drosophila virilis (Fruit fly) protein is Glutamyl-tRNA(Gln) amidotransferase subunit C, mitochondrial.